The sequence spans 238 residues: MYAPGGAGLPGGRRRRSPGGSALPKQPERSLASALPGALSITALCTALAEPAWLHIHGGTCSRQELGVSDVLGYVHPDLLKDFCMNPQTVLLLRVIAAFCFLGILCSLSAFLLDVFGPKHPALKITRRYAFAHILTVLQCATVIGFSYWASELILAQQQQHKKYHGSQVYVTFAVSFYLVAGAGGASILATAANLLRHYPTEEEEQALELLSEMEENEPYPAEYEVINQFQPPPAYTP.

Methionine 1 carries the N-acetylmethionine modification. Over residues 1–11 (MYAPGGAGLPG) the composition is skewed to gly residues. A disordered region spans residues 1–27 (MYAPGGAGLPGGRRRRSPGGSALPKQP). At serine 17 the chain carries Phosphoserine. 3 helical membrane-spanning segments follow: residues 96–116 (IAAF…LDVF), 130–150 (AFAH…SYWA), and 169–189 (VYVT…ASIL).

This sequence belongs to the TMEM127 family. Widely expressed.

The protein localises to the cell membrane. It localises to the cytoplasm. In terms of biological role, controls cell proliferation acting as a negative regulator of TOR signaling pathway mediated by mTORC1. May act as a tumor suppressor. In Homo sapiens (Human), this protein is Transmembrane protein 127 (TMEM127).